We begin with the raw amino-acid sequence, 358 residues long: Leukotriene B4 receptor 2 (358 aa).

Residues 1–24 lie on the Extracellular side of the membrane; that stretch reads MSVCYRPPGNETLLSWKTSRATGT. An N-linked (GlcNAc...) asparagine glycan is attached at Asn-10. A helical transmembrane segment spans residues 25–45; it reads AFLLLAALLGLPGNGFVVWSL. Topologically, residues 46–60 are cytoplasmic; the sequence is AGWRPARGRPLAATL. A helical membrane pass occupies residues 61-81; sequence VLHLALADGAVLLLTPLFVAF. Topologically, residues 82–96 are extracellular; it reads LTRQAWPLGQAGCKA. The chain crosses the membrane as a helical span at residues 97–117; the sequence is VYYVCALSMYASVLLTGLLSL. At 118–140 the chain is on the cytoplasmic side; sequence QRCLAVTRPFLAPRLRSPALARR. A helical membrane pass occupies residues 141–161; it reads LLLAVWLAALLLAVPAAVYRH. At 162–185 the chain is on the extracellular side; sequence LWRDRVCQLCHPSPVHAAAHLSLE. The chain crosses the membrane as a helical span at residues 186 to 206; the sequence is TLTAFVLPFGLMLGCYSVTLA. Topologically, residues 207-224 are cytoplasmic; the sequence is RLRGARWGSGRHGARVGR. Residues 225–245 traverse the membrane as a helical segment; it reads LVSAIVLAFGLLWAPYHAVNL. Topologically, residues 246–275 are extracellular; sequence LQAVAALAPPEGALAKLGGAGQAARAGTTA. Residues 276–296 traverse the membrane as a helical segment; the sequence is LAFFSSSVNPVLYVFTAGDLL. Residues 297 to 358 are Cytoplasmic-facing; the sequence is PRAGPRFLTR…MEKDGPEWDL (62 aa). Positions 311–358 are disordered; the sequence is SGEARGGGRSREGTMELRTTPQLKVVGQGRGNGDPGGGMEKDGPEWDL. A compositionally biased stretch (gly residues) spans 338–348; that stretch reads QGRGNGDPGGG. Positions 349 to 358 are enriched in basic and acidic residues; sequence MEKDGPEWDL.

The protein belongs to the G-protein coupled receptor 1 family. As to expression, widely expressed.

Its subcellular location is the cell membrane. Low-affinity receptor for leukotrienes including leukotriene B4. Mediates chemotaxis of granulocytes and macrophages. The response is mediated via G-proteins that activate a phosphatidylinositol-calcium second messenger system. The rank order of affinities for the leukotrienes is LTB4 &gt; 12-epi-LTB4 &gt; LTB5 &gt; LTB3. This chain is Leukotriene B4 receptor 2 (LTB4R2), found in Homo sapiens (Human).